The primary structure comprises 484 residues: Ribosomal RNA small subunit methyltransferase F (484 aa).

S-adenosyl-L-methionine is bound by residues 119–125, Glu-143, Asp-170, and Asp-188; that span reads ASAPGSK. The active-site Nucleophile is the Cys-241.

Belongs to the class I-like SAM-binding methyltransferase superfamily. RsmB/NOP family.

The protein localises to the cytoplasm. The enzyme catalyses cytidine(1407) in 16S rRNA + S-adenosyl-L-methionine = 5-methylcytidine(1407) in 16S rRNA + S-adenosyl-L-homocysteine + H(+). In terms of biological role, specifically methylates the cytosine at position 1407 (m5C1407) of 16S rRNA. The protein is Ribosomal RNA small subunit methyltransferase F of Shewanella frigidimarina (strain NCIMB 400).